Here is a 438-residue protein sequence, read N- to C-terminus: Thymidine phosphorylase (438 aa).

This sequence belongs to the thymidine/pyrimidine-nucleoside phosphorylase family. In terms of assembly, homodimer.

It carries out the reaction thymidine + phosphate = 2-deoxy-alpha-D-ribose 1-phosphate + thymine. Its pathway is pyrimidine metabolism; dTMP biosynthesis via salvage pathway; dTMP from thymine: step 1/2. Its function is as follows. The enzymes which catalyze the reversible phosphorolysis of pyrimidine nucleosides are involved in the degradation of these compounds and in their utilization as carbon and energy sources, or in the rescue of pyrimidine bases for nucleotide synthesis. The polypeptide is Thymidine phosphorylase (Agrobacterium fabrum (strain C58 / ATCC 33970) (Agrobacterium tumefaciens (strain C58))).